Here is a 111-residue protein sequence, read N- to C-terminus: uncharacterized protein (111 aa).

One can recognise an HIT domain in the interval 8 to 111 (LFLKIIKREE…HVHIIPYYKK (104 aa)). The Histidine triad motif signature appears at 100-104 (HTHVH).

This is an uncharacterized protein from Mesomycoplasma hyorhinis (Mycoplasma hyorhinis).